Reading from the N-terminus, the 246-residue chain is tRNA (guanine-N(7)-)-methyltransferase (246 aa).

Residues Glu-77, Glu-102, Asp-129, and Asp-152 each coordinate S-adenosyl-L-methionine. Residue Asp-152 is part of the active site. Substrate contacts are provided by residues Lys-156, Asp-188, and 225–228 (TKFE).

Belongs to the class I-like SAM-binding methyltransferase superfamily. TrmB family.

The enzyme catalyses guanosine(46) in tRNA + S-adenosyl-L-methionine = N(7)-methylguanosine(46) in tRNA + S-adenosyl-L-homocysteine. The protein operates within tRNA modification; N(7)-methylguanine-tRNA biosynthesis. Its function is as follows. Catalyzes the formation of N(7)-methylguanine at position 46 (m7G46) in tRNA. The polypeptide is tRNA (guanine-N(7)-)-methyltransferase (Haemophilus influenzae (strain PittEE)).